The chain runs to 84 residues: RNA-binding protein Hfq (84 aa).

The Sm domain maps to 9–68; that stretch reads DPYLNTLRKERVPVSIYLVNGIKLQGQIESFDQFVILLKNTVSQMVYKHAISTVVPSRPV.

The protein belongs to the Hfq family. As to quaternary structure, homohexamer.

Functionally, RNA chaperone that binds small regulatory RNA (sRNAs) and mRNAs to facilitate mRNA translational regulation in response to envelope stress, environmental stress and changes in metabolite concentrations. Also binds with high specificity to tRNAs. The sequence is that of RNA-binding protein Hfq from Azotobacter vinelandii (strain DJ / ATCC BAA-1303).